The chain runs to 1417 residues: DNA-directed RNA polymerase subunit beta' (1417 aa).

Zn(2+) is bound by residues cysteine 71, cysteine 73, cysteine 86, and cysteine 89. Mg(2+)-binding residues include aspartate 461, aspartate 463, and aspartate 465. Residues cysteine 815, cysteine 889, cysteine 896, and cysteine 899 each coordinate Zn(2+).

The protein belongs to the RNA polymerase beta' chain family. The RNAP catalytic core consists of 2 alpha, 1 beta, 1 beta' and 1 omega subunit. When a sigma factor is associated with the core the holoenzyme is formed, which can initiate transcription. Mg(2+) is required as a cofactor. Zn(2+) serves as cofactor.

The catalysed reaction is RNA(n) + a ribonucleoside 5'-triphosphate = RNA(n+1) + diphosphate. In terms of biological role, DNA-dependent RNA polymerase catalyzes the transcription of DNA into RNA using the four ribonucleoside triphosphates as substrates. In Pasteurella multocida (strain Pm70), this protein is DNA-directed RNA polymerase subunit beta'.